A 773-amino-acid polypeptide reads, in one-letter code: Ergothioneine biosynthesis protein 1 (773 aa).

Residues 16 to 322 (PESIEQSLKR…ESTIADYSTY (307 aa)) are L-histidine N(alpha)-methyltransferase. Y51 serves as a coordination point for L-histidine. Residues G85, K91, D112, and 142–143 (CF) each bind S-adenosyl-L-methionine. Residues N172, Y212, and 287–289 (EES) each bind L-histidine. The hercynylcysteine S-oxide synthase stretch occupies residues 347–772 (ALRKVWLFIT…YAWIGARLVK (426 aa)). H382, H476, and H480 together coordinate Fe cation.

This sequence in the N-terminal section; belongs to the methyltransferase superfamily. EgtD family. The protein in the C-terminal section; belongs to the EgtB family. Fe(2+) is required as a cofactor.

The protein localises to the cytoplasm. It localises to the nucleus. The catalysed reaction is L-histidine + 3 S-adenosyl-L-methionine = hercynine + 3 S-adenosyl-L-homocysteine + 3 H(+). It catalyses the reaction hercynine + L-cysteine + O2 = S-(hercyn-2-yl)-L-cysteine S-oxide + H2O. The protein operates within amino-acid biosynthesis; ergothioneine biosynthesis. Its function is as follows. Catalyzes the SAM-dependent triple methylation of the alpha-amino group of histidine to form hercynine and subsequent conjugation with cysteine and oxygen to form hercynylcysteine sulfoxide, the first two steps in the biosynthesis pathway of ergothioneine. May play a role in meiosis. The sequence is that of Ergothioneine biosynthesis protein 1 from Schizosaccharomyces pombe (strain 972 / ATCC 24843) (Fission yeast).